The following is a 554-amino-acid chain: Tetratricopeptide repeat protein 34 (554 aa).

TPR repeat units lie at residues glutamate 38–alanine 71, serine 166–asparagine 199, valine 200–threonine 233, proline 294–serine 327, glutamate 328–aspartate 361, asparagine 411–aspartate 445, serine 452–glutamine 485, and alanine 500–histidine 533.

The sequence is that of Tetratricopeptide repeat protein 34 (Ttc34) from Mus musculus (Mouse).